Consider the following 231-residue polypeptide: MAHIGKRISKAREGIDRVKLYPIRDAIALIKERASAKFDETVEIAMNLGVDPKHADQMVRGVVNLPNGTGRTLRVAVFARGAKADEATAAGADIVGAEDLVATVQGGTIAFDRCIATPDMMPLVGRLGKVLGPRGLMPNPKVGTVTMDVAAAVKASKGGAVEFRVEKAGIIQGSVGKASFDDDKLAENIAAFVDAVAKAKPQGAKGTYIQRVAISSTMGPGVKVDPATLTA.

This sequence belongs to the universal ribosomal protein uL1 family. Part of the 50S ribosomal subunit.

Functionally, binds directly to 23S rRNA. The L1 stalk is quite mobile in the ribosome, and is involved in E site tRNA release. Protein L1 is also a translational repressor protein, it controls the translation of the L11 operon by binding to its mRNA. This Methylocella silvestris (strain DSM 15510 / CIP 108128 / LMG 27833 / NCIMB 13906 / BL2) protein is Large ribosomal subunit protein uL1.